A 299-amino-acid chain; its full sequence is Ankyrin repeat domain-containing protein 54 (299 aa).

The disordered stretch occupies residues methionine 1 to proline 27. At alanine 2 the chain carries N-acetylalanine. Serine 62 is modified (phosphoserine). The Nuclear localization signal (NLS) motif lies at arginine 98–serine 116. 4 ANK repeats span residues histidine 108 to alanine 137, lysine 141 to glutamine 170, leucine 174 to alanine 203, and alanine 207 to glutamine 239. The segment at aspartate 140–isoleucine 240 is LYN-binding. Residues leucine 282–glutamine 292 carry the Nuclear export signal (NES) motif.

Interacts (via ankyrin repeat region) with LYN (via SH3-domain) in an activation-independent status of LYN. Forms a multiprotein complex with LYN and HCLS1. Interacts with TSN2, VAV1, DBNL and LASP1.

It is found in the nucleus. The protein resides in the cytoplasm. The protein localises to the midbody. Functionally, plays an important role in regulating intracellular signaling events associated with erythroid terminal differentiation. This chain is Ankyrin repeat domain-containing protein 54 (Ankrd54), found in Rattus norvegicus (Rat).